Here is a 367-residue protein sequence, read N- to C-terminus: Glycolate oxidase 3 (367 aa).

The FMN hydroxy acid dehydrogenase domain occupies 1 to 360 (MELITNVSEY…TRNHVITDSD (360 aa)). Y25 provides a ligand contact to glyoxylate. FMN contacts are provided by residues 78–80 (PSA), S107, 128–130 (QLY), and T156. Y130 is a glyoxylate binding site. Residue R165 participates in glyoxylate binding. Residues K231 and S253 each contribute to the FMN site. The glyoxylate site is built by H255 and R258. The active-site Proton acceptor is H255. Residues 286–290 (DGGVR) and 309–310 (GR) each bind FMN. The Microbody targeting signal signature appears at 365-367 (SRL).

Belongs to the FMN-dependent alpha-hydroxy acid dehydrogenase family. Homotetramer. FMN is required as a cofactor.

Its subcellular location is the peroxisome. The enzyme catalyses glycolate + O2 = glyoxylate + H2O2. It participates in photosynthesis; photorespiration; glycine from 2-phosphoglycolate: step 2/3. Its function is as follows. Catalyzes the oxidation of glycolate to glyoxylate, with a reduction of O2 to H2O2. Is a key enzyme in photorespiration in green plants. This Oryza sativa subsp. indica (Rice) protein is Glycolate oxidase 3 (GLO3).